Reading from the N-terminus, the 202-residue chain is Nuclear transcription factor Y subunit C-6 (202 aa).

Low complexity predominate over residues 1-16 (MAENNNNNGDNMNNDN). Disordered regions lie at residues 1-29 (MAEN…LPPM) and 180-202 (AWPA…GGGN). The segment covering 17-29 (HQQPPSYSQLPPM) has biased composition (polar residues).

The protein belongs to the NFYC/HAP5 subunit family. Heterotrimeric transcription factor composed of three components, NF-YA, NF-YB and NF-YC. NF-YB and NF-YC must interact and dimerize for NF-YA association and DNA binding. Expressed in flowers and siliques.

The protein localises to the nucleus. Functionally, stimulates the transcription of various genes by recognizing and binding to a CCAAT motif in promoters. The protein is Nuclear transcription factor Y subunit C-6 (NFYC6) of Arabidopsis thaliana (Mouse-ear cress).